A 187-amino-acid chain; its full sequence is MSRIGKRPIPLPKNVTLTLDGQQVTVKGPKGQLSRVFPPEVNVVQEGEAIVVKRRDDSRPAKERHGLCRTLLANMVEGVSQGFTKKLEIQGVGYRAQLQGKTLVLSMGYSHPVEIVPPEGITLEIEDNQGKKVQQGTIVLVSGIDKELVGNTSARIRAVRPPEPYKGKGIRYMGEFVRRKVGKTGKK.

This sequence belongs to the universal ribosomal protein uL6 family. In terms of assembly, part of the 50S ribosomal subunit.

Functionally, this protein binds to the 23S rRNA, and is important in its secondary structure. It is located near the subunit interface in the base of the L7/L12 stalk, and near the tRNA binding site of the peptidyltransferase center. This chain is Large ribosomal subunit protein uL6, found in Thermosynechococcus vestitus (strain NIES-2133 / IAM M-273 / BP-1).